The following is a 123-amino-acid chain: UPF0102 protein Fjoh_1217 (123 aa).

It belongs to the UPF0102 family.

The chain is UPF0102 protein Fjoh_1217 from Flavobacterium johnsoniae (strain ATCC 17061 / DSM 2064 / JCM 8514 / BCRC 14874 / CCUG 350202 / NBRC 14942 / NCIMB 11054 / UW101) (Cytophaga johnsonae).